A 334-amino-acid polypeptide reads, in one-letter code: Thiamine thiazole synthase (334 aa).

Substrate contacts are provided by residues C86, 107–108, G115, and V183; that span reads EA. C221 carries the 2,3-didehydroalanine (Cys) modification. Residues D223, H238, M290, and 300–302 each bind substrate; that span reads RMG.

Belongs to the THI4 family. Homooctamer. Fe cation is required as a cofactor. During the catalytic reaction, a sulfide is transferred from Cys-221 to a reaction intermediate, generating a dehydroalanine residue.

Its subcellular location is the cytoplasm. It localises to the nucleus. It carries out the reaction [ADP-thiazole synthase]-L-cysteine + glycine + NAD(+) = [ADP-thiazole synthase]-dehydroalanine + ADP-5-ethyl-4-methylthiazole-2-carboxylate + nicotinamide + 3 H2O + 2 H(+). Involved in biosynthesis of the thiamine precursor thiazole. Catalyzes the conversion of NAD and glycine to adenosine diphosphate 5-(2-hydroxyethyl)-4-methylthiazole-2-carboxylic acid (ADT), an adenylated thiazole intermediate. The reaction includes an iron-dependent sulfide transfer from a conserved cysteine residue of the protein to a thiazole intermediate. The enzyme can only undergo a single turnover, which suggests it is a suicide enzyme. May have additional roles in adaptation to various stress conditions and in DNA damage tolerance. This is Thiamine thiazole synthase from Ajellomyces capsulatus (strain G186AR / H82 / ATCC MYA-2454 / RMSCC 2432) (Darling's disease fungus).